Consider the following 489-residue polypeptide: GTPase Der (489 aa).

EngA-type G domains are found at residues 3-166 and 200-373; these read PVVA…AEAM and IKLA…ESAT. GTP contacts are provided by residues 9 to 16, 56 to 60, 118 to 121, 206 to 213, 253 to 257, and 318 to 321; these read GRPNVGKS, DTGGI, NKVD, GKPNVGKS, DTAGV, and NKWD. The 85-residue stretch at 374–458 folds into the KH-like domain; that stretch reads RRVSTSMLTR…PIQVRFQEGG (85 aa).

The protein belongs to the TRAFAC class TrmE-Era-EngA-EngB-Septin-like GTPase superfamily. EngA (Der) GTPase family. In terms of assembly, associates with the 50S ribosomal subunit.

Functionally, GTPase that plays an essential role in the late steps of ribosome biogenesis. The chain is GTPase Der from Shewanella loihica (strain ATCC BAA-1088 / PV-4).